A 70-amino-acid chain; its full sequence is Large ribosomal subunit protein bL31c (70 aa).

The protein belongs to the bacterial ribosomal protein bL31 family. Type A subfamily. Part of the 50S ribosomal subunit.

It is found in the plastid. The protein resides in the chloroplast. Functionally, binds the 23S rRNA. In Emiliania huxleyi (Coccolithophore), this protein is Large ribosomal subunit protein bL31c.